The primary structure comprises 497 residues: tRNA (adenine(58)-N(1))-methyltransferase non-catalytic subunit TRM6 (497 aa).

2 disordered regions span residues 1–20 and 69–100; these read MEGS…DHRI and TSGG…IVDD. Residues 79–100 are compositionally biased toward basic and acidic residues; the sequence is KREEPTAETKEAGTDNRNIVDD. 94-104 serves as a coordination point for substrate; the sequence is NRNIVDDGKSQ. Threonine 107 carries the phosphothreonine modification. Substrate contacts are provided by residues 145-154 and 175-182; these read KYIKKKKKKY and REPGKINH. The disordered stretch occupies residues 276–354; it reads SSEPKDSALV…EKQRRQEEQR (79 aa). Serine 298 and serine 305 each carry phosphoserine. Residues 327–354 are compositionally biased toward basic and acidic residues; sequence DPEHKGPKERGSKKDYIQEKQRRQEEQR. Substrate contacts are provided by residues arginine 349, arginine 377, 415–423, and 434–441; these read RERGGVINL and QVLPDRSH. The tract at residues 472-497 is disordered; that stretch reads SNASTLESHETEEPAAKKRKCPESDS. The segment covering 478–497 has biased composition (basic and acidic residues); sequence ESHETEEPAAKKRKCPESDS.

It belongs to the TRM6/GCD10 family. As to quaternary structure, heterotetramer; composed of two copies of TRMT6 and two copies of TRMT61A. Expressed in brain, liver, testis and ovary.

The protein localises to the nucleus. In terms of biological role, substrate-binding subunit of tRNA (adenine-N(1)-)-methyltransferase, which catalyzes the formation of N(1)-methyladenine at position 58 (m1A58) in initiator methionyl-tRNA. Together with the TRMT61A catalytic subunit, part of a mRNA N(1)-methyltransferase complex that mediates methylation of adenosine residues at the N(1) position of a small subset of mRNAs: N(1) methylation takes place in tRNA T-loop-like structures of mRNAs and is only present at low stoichiometries. This Homo sapiens (Human) protein is tRNA (adenine(58)-N(1))-methyltransferase non-catalytic subunit TRM6 (TRMT6).